The primary structure comprises 361 residues: Peptide chain release factor 1 (361 aa).

Glutamine 235 is modified (N5-methylglutamine).

Belongs to the prokaryotic/mitochondrial release factor family. In terms of processing, methylated by PrmC. Methylation increases the termination efficiency of RF1.

It is found in the cytoplasm. Functionally, peptide chain release factor 1 directs the termination of translation in response to the peptide chain termination codons UAG and UAA. The polypeptide is Peptide chain release factor 1 (Xanthomonas euvesicatoria pv. vesicatoria (strain 85-10) (Xanthomonas campestris pv. vesicatoria)).